Reading from the N-terminus, the 580-residue chain is uncharacterized protein (580 aa).

The 226-residue stretch at 300-525 (PGYTATFLET…LRVLVELGYD (226 aa)) folds into the PE-PPE domain.

This sequence belongs to the mycobacterial PPE family.

This is an uncharacterized protein from Mycobacterium tuberculosis (strain CDC 1551 / Oshkosh).